The following is a 426-amino-acid chain: Adenylosuccinate synthetase 2 (426 aa).

GTP contacts are provided by residues 12-18 (GDEGKGK) and 40-42 (GHT). The Proton acceptor role is filled by Asp-13. Mg(2+) is bound by residues Asp-13 and Gly-40. IMP is bound by residues 13-16 (DEGK), 38-41 (NAGH), Arg-147, Asn-223, Thr-238, and Arg-302. The active-site Proton donor is the His-41. 298–304 (TNTGRRR) contributes to the substrate binding site. Residues Arg-304, 330–332 (KLD), and 412–414 (GVG) contribute to the GTP site.

This sequence belongs to the adenylosuccinate synthetase family. Homodimer. Requires Mg(2+) as cofactor.

Its subcellular location is the cytoplasm. It carries out the reaction IMP + L-aspartate + GTP = N(6)-(1,2-dicarboxyethyl)-AMP + GDP + phosphate + 2 H(+). Its pathway is purine metabolism; AMP biosynthesis via de novo pathway; AMP from IMP: step 1/2. Its function is as follows. Plays an important role in the de novo pathway and in the salvage pathway of purine nucleotide biosynthesis. Catalyzes the first committed step in the biosynthesis of AMP from IMP. The sequence is that of Adenylosuccinate synthetase 2 from Laccaria bicolor (strain S238N-H82 / ATCC MYA-4686) (Bicoloured deceiver).